The chain runs to 349 residues: Phosphoribosylformylglycinamidine cyclo-ligase (349 aa).

It belongs to the AIR synthase family.

Its subcellular location is the cytoplasm. The enzyme catalyses 2-formamido-N(1)-(5-O-phospho-beta-D-ribosyl)acetamidine + ATP = 5-amino-1-(5-phospho-beta-D-ribosyl)imidazole + ADP + phosphate + H(+). It functions in the pathway purine metabolism; IMP biosynthesis via de novo pathway; 5-amino-1-(5-phospho-D-ribosyl)imidazole from N(2)-formyl-N(1)-(5-phospho-D-ribosyl)glycinamide: step 2/2. This Albidiferax ferrireducens (strain ATCC BAA-621 / DSM 15236 / T118) (Rhodoferax ferrireducens) protein is Phosphoribosylformylglycinamidine cyclo-ligase.